Here is a 162-residue protein sequence, read N- to C-terminus: Lipoprotein signal peptidase (162 aa).

4 helical membrane-spanning segments follow: residues 12 to 32 (WFALAALVIVLDQISKLYFNS), 42 to 62 (VVEGFFNFTLVYNPGAAFSFL), 66 to 86 (GGWQKYLFTILAFAVSGWLGW), and 93 to 113 (FSGLMNLAAAFIMGGALGNVI). Residues aspartate 123 and aspartate 142 contribute to the active site. The chain crosses the membrane as a helical span at residues 133-153 (WYYPAFNLADSFICVGAALMV).

Belongs to the peptidase A8 family.

Its subcellular location is the cell inner membrane. The enzyme catalyses Release of signal peptides from bacterial membrane prolipoproteins. Hydrolyzes -Xaa-Yaa-Zaa-|-(S,diacylglyceryl)Cys-, in which Xaa is hydrophobic (preferably Leu), and Yaa (Ala or Ser) and Zaa (Gly or Ala) have small, neutral side chains.. It participates in protein modification; lipoprotein biosynthesis (signal peptide cleavage). Its function is as follows. This protein specifically catalyzes the removal of signal peptides from prolipoproteins. In Chromobacterium violaceum (strain ATCC 12472 / DSM 30191 / JCM 1249 / CCUG 213 / NBRC 12614 / NCIMB 9131 / NCTC 9757 / MK), this protein is Lipoprotein signal peptidase.